The sequence spans 429 residues: Citrate synthase, plasmid (429 aa).

Active-site residues include His-306 and Asp-364.

This sequence belongs to the citrate synthase family.

The enzyme catalyses oxaloacetate + acetyl-CoA + H2O = citrate + CoA + H(+). Its pathway is carbohydrate metabolism; tricarboxylic acid cycle; isocitrate from oxaloacetate: step 1/2. In terms of biological role, the exact function of the plasmid-encoded citrate synthase is not clear, it could help nodulation by allowing the bacteria to use citrate as a chelator of iron and calcium. The chain is Citrate synthase, plasmid (pcsA) from Rhizobium tropici.